Reading from the N-terminus, the 358-residue chain is 3-dehydroquinate synthase (358 aa).

Residues 75-80, 109-113, 133-134, Lys146, and Lys155 each bind NAD(+); these read SGEGSK, GVLGD, and TT. Zn(2+) is bound by residues Glu188, His245, and His262.

This sequence belongs to the sugar phosphate cyclases superfamily. Dehydroquinate synthase family. It depends on Co(2+) as a cofactor. The cofactor is Zn(2+). NAD(+) is required as a cofactor.

The protein localises to the cytoplasm. It carries out the reaction 7-phospho-2-dehydro-3-deoxy-D-arabino-heptonate = 3-dehydroquinate + phosphate. It functions in the pathway metabolic intermediate biosynthesis; chorismate biosynthesis; chorismate from D-erythrose 4-phosphate and phosphoenolpyruvate: step 2/7. Functionally, catalyzes the conversion of 3-deoxy-D-arabino-heptulosonate 7-phosphate (DAHP) to dehydroquinate (DHQ). This Methylacidiphilum infernorum (isolate V4) (Methylokorus infernorum (strain V4)) protein is 3-dehydroquinate synthase.